The chain runs to 1400 residues: DNA-directed RNA polymerase subunit beta' (1400 aa).

The Zn(2+) site is built by C71, C73, C86, and C89. Mg(2+) contacts are provided by D462, D464, and D466. 4 residues coordinate Zn(2+): C811, C885, C892, and C895.

The protein belongs to the RNA polymerase beta' chain family. In terms of assembly, the RNAP catalytic core consists of 2 alpha, 1 beta, 1 beta' and 1 omega subunit. When a sigma factor is associated with the core the holoenzyme is formed, which can initiate transcription. Mg(2+) serves as cofactor. Zn(2+) is required as a cofactor.

The catalysed reaction is RNA(n) + a ribonucleoside 5'-triphosphate = RNA(n+1) + diphosphate. Its function is as follows. DNA-dependent RNA polymerase catalyzes the transcription of DNA into RNA using the four ribonucleoside triphosphates as substrates. The chain is DNA-directed RNA polymerase subunit beta' from Brucella suis biovar 1 (strain 1330).